Reading from the N-terminus, the 278-residue chain is Shikimate dehydrogenase (NADP(+)) (278 aa).

Shikimate contacts are provided by residues 23-25 (SRS) and Thr-70. Lys-74 serves as the catalytic Proton acceptor. Glu-86 is a binding site for NADP(+). 2 residues coordinate shikimate: Asn-95 and Asp-110. Residues 135–139 (GAGGA), 159–164 (NRTKEK), and Met-224 each bind NADP(+). Tyr-226 provides a ligand contact to shikimate. Gly-248 lines the NADP(+) pocket.

It belongs to the shikimate dehydrogenase family. In terms of assembly, homodimer.

The enzyme catalyses shikimate + NADP(+) = 3-dehydroshikimate + NADPH + H(+). It participates in metabolic intermediate biosynthesis; chorismate biosynthesis; chorismate from D-erythrose 4-phosphate and phosphoenolpyruvate: step 4/7. Its function is as follows. Involved in the biosynthesis of the chorismate, which leads to the biosynthesis of aromatic amino acids. Catalyzes the reversible NADPH linked reduction of 3-dehydroshikimate (DHSA) to yield shikimate (SA). This chain is Shikimate dehydrogenase (NADP(+)), found in Alcanivorax borkumensis (strain ATCC 700651 / DSM 11573 / NCIMB 13689 / SK2).